Here is a 945-residue protein sequence, read N- to C-terminus: Isoleucine--tRNA ligase (945 aa).

Residues 66–76 (PYANGDIHLGH) carry the 'HIGH' region motif. E581 is a binding site for L-isoleucyl-5'-AMP. The 'KMSKS' region signature appears at 622 to 626 (KMSKS). Position 625 (K625) interacts with ATP. Zn(2+)-binding residues include C908, C911, C928, and C931.

Belongs to the class-I aminoacyl-tRNA synthetase family. IleS type 1 subfamily. In terms of assembly, monomer. Zn(2+) serves as cofactor.

It localises to the cytoplasm. It catalyses the reaction tRNA(Ile) + L-isoleucine + ATP = L-isoleucyl-tRNA(Ile) + AMP + diphosphate. Its function is as follows. Catalyzes the attachment of isoleucine to tRNA(Ile). As IleRS can inadvertently accommodate and process structurally similar amino acids such as valine, to avoid such errors it has two additional distinct tRNA(Ile)-dependent editing activities. One activity is designated as 'pretransfer' editing and involves the hydrolysis of activated Val-AMP. The other activity is designated 'posttransfer' editing and involves deacylation of mischarged Val-tRNA(Ile). This is Isoleucine--tRNA ligase from Burkholderia cenocepacia (strain HI2424).